Reading from the N-terminus, the 73-residue chain is Homeodomain-only protein (73 aa).

Positions 3–62 (AETASGPTEDQVEILEYNFNKVDKHPDSTTLCLIAAEAGLSEEETQKWFKQRLAKWRRSE) form a DNA-binding region, homeobox; degenerate.

In terms of assembly, interacts with serum response factor (SRF). Component of a large complex containing histone deacetylases such as HDAC2. Interacts with the acetylated forms of HSPA1A and HSPA1B. Interacts with HSPA8. In terms of tissue distribution, widely expressed. Expressed in the heart, brain, placenta, lung, skeletal and smooth muscles, uterus, urinary bladder, kidney and spleen. Down-regulated in some types of cancer such as lung cancer, choriocarcinoma, head and neck squamous cell carcinoma and oral squamous cell carcinoma.

The protein localises to the nucleus. It is found in the cytoplasm. Functionally, atypical homeodomain protein which does not bind DNA and is required to modulate cardiac growth and development. Acts via its interaction with SRF, thereby modulating the expression of SRF-dependent cardiac-specific genes and cardiac development. Prevents SRF-dependent transcription either by inhibiting SRF binding to DNA or by recruiting histone deacetylase (HDAC) proteins that prevent transcription by SRF. Overexpression causes cardiac hypertrophy. May act as a tumor suppressor. Acts as a co-chaperone for HSPA1A and HSPA1B chaperone proteins and assists in chaperone-mediated protein refolding. The polypeptide is Homeodomain-only protein (HOPX) (Homo sapiens (Human)).